The primary structure comprises 410 residues: Protein disulfide isomerase CRELD1 (410 aa).

An N-terminal signal peptide occupies residues 1 to 29; sequence MGMSRRMFLTVYGSLWLLLLLSRPGVSKP. Over 30–352 the chain is Extracellular; that stretch reads QLCQTCQNLV…GLFDDITDDE (323 aa). The short motif at 32 to 35 is the CXXC element; it reads CQTC. 4 disulfide bridges follow: Cys-32–Cys-35, Cys-141–Cys-155, Cys-149–Cys-167, and Cys-169–Cys-178. The EGF-like 1 domain maps to 139–179; the sequence is LSCPGGTEKPCSGNGQCNGDGTRFGTGVCDCYTSYGGPVCM. 2 FU repeats span residues 194-243 and 254-301; these read HLVC…DHCK and SYEC…ELPK. A CXXC motif is present at residues 264-267; sequence CIGC. Intrachain disulfides connect Cys-264–Cys-267, Cys-295–Cys-309, Cys-302–Cys-318, and Cys-320–Cys-331. The EGF-like 2; calcium-binding domain occupies 291-332; the sequence is DVDECDSELPKCKGSHEECVNTEGSFTCVCEKDYSRIDGMCR. A helical membrane pass occupies residues 353-373; sequence VVVLQQMFFGVVICALATLAA. Lys-374 is a topological domain (cytoplasmic). The helical transmembrane segment at 375–395 threads the bilayer; it reads GDMVFTAIFIGAVAAMAGYWL. Residues 396 to 410 lie on the Extracellular side of the membrane; sequence SEKGDRALDSFMKGR.

It belongs to the CRELD family.

Its subcellular location is the membrane. It catalyses the reaction Catalyzes the rearrangement of -S-S- bonds in proteins.. In terms of biological role, protein disulfide isomerase. Promotes the localization of acetylcholine receptors (AChRs) to the plasma membrane. The sequence is that of Protein disulfide isomerase CRELD1 (creld1) from Xenopus tropicalis (Western clawed frog).